Here is a 152-residue protein sequence, read N- to C-terminus: 3-hydroxyacyl-[acyl-carrier-protein] dehydratase FabZ (152 aa).

The active site involves His58.

It belongs to the thioester dehydratase family. FabZ subfamily.

The protein localises to the cytoplasm. It carries out the reaction a (3R)-hydroxyacyl-[ACP] = a (2E)-enoyl-[ACP] + H2O. In terms of biological role, involved in unsaturated fatty acids biosynthesis. Catalyzes the dehydration of short chain beta-hydroxyacyl-ACPs and long chain saturated and unsaturated beta-hydroxyacyl-ACPs. The polypeptide is 3-hydroxyacyl-[acyl-carrier-protein] dehydratase FabZ (Prochlorococcus marinus (strain MIT 9301)).